A 383-amino-acid chain; its full sequence is MLYQIFYPLRESFFGFNLFRYITFRTAGAVATALILVILFAPGVIEKLKKLHFGQVVRDDGPETHLVKTGTPTMGGIFIVGSILISVLLWAELDNLKIILLTLSLVILSIAGFLDDFLKIKYKNSKGLPGIYKIFFQTFVGIIIGVYLYYFDKSTFLMTFELNQGIGVLEAVKVAQVPSSTIFLPFASTIYIDLKILYIPFATFVVVSMSNAVNLTDGLDGLAIGLLIIMSMALAVLSYVSGNSLIATYLKIPFISDAGEVTVFVGALIGAGLGFLWFNAHPAQVFMGDVGSLSLGGVLGIIALFIKHELLLVIIGAVYVAEALSVVLQVFSYKFFNKKRIFKMAPLHHHFEKSGWKETQVVFRFYIIGIIMALIGIATLKIR.

9 consecutive transmembrane segments (helical) span residues 26 to 46 (TAGA…GVIE), 73 to 93 (TMGG…WAEL), 98 to 118 (IILL…DDFL), 131 to 151 (IYKI…LYYF), 182 to 202 (IFLP…IPFA), 221 to 241 (GLAI…SYVS), 258 to 278 (AGEV…FLWF), 283 to 305 (AQVF…IALF), and 360 to 380 (QVVF…IATL).

This sequence belongs to the glycosyltransferase 4 family. MraY subfamily. It depends on Mg(2+) as a cofactor.

The protein resides in the cell inner membrane. It catalyses the reaction UDP-N-acetyl-alpha-D-muramoyl-L-alanyl-gamma-D-glutamyl-meso-2,6-diaminopimeloyl-D-alanyl-D-alanine + di-trans,octa-cis-undecaprenyl phosphate = di-trans,octa-cis-undecaprenyl diphospho-N-acetyl-alpha-D-muramoyl-L-alanyl-D-glutamyl-meso-2,6-diaminopimeloyl-D-alanyl-D-alanine + UMP. It functions in the pathway cell wall biogenesis; peptidoglycan biosynthesis. Functionally, catalyzes the initial step of the lipid cycle reactions in the biosynthesis of the cell wall peptidoglycan: transfers peptidoglycan precursor phospho-MurNAc-pentapeptide from UDP-MurNAc-pentapeptide onto the lipid carrier undecaprenyl phosphate, yielding undecaprenyl-pyrophosphoryl-MurNAc-pentapeptide, known as lipid I. This chain is Phospho-N-acetylmuramoyl-pentapeptide-transferase, found in Brachyspira hyodysenteriae (strain ATCC 49526 / WA1).